The sequence spans 178 residues: Probable chorismate pyruvate-lyase (178 aa).

Substrate contacts are provided by M37, R78, L114, and E165.

This sequence belongs to the UbiC family.

Its subcellular location is the cytoplasm. It carries out the reaction chorismate = 4-hydroxybenzoate + pyruvate. The protein operates within cofactor biosynthesis; ubiquinone biosynthesis. Removes the pyruvyl group from chorismate, with concomitant aromatization of the ring, to provide 4-hydroxybenzoate (4HB) for the ubiquinone pathway. This is Probable chorismate pyruvate-lyase from Aeromonas hydrophila subsp. hydrophila (strain ATCC 7966 / DSM 30187 / BCRC 13018 / CCUG 14551 / JCM 1027 / KCTC 2358 / NCIMB 9240 / NCTC 8049).